The primary structure comprises 174 residues: Nucleoside-triphosphatase THEP1 (174 aa).

Residues Gly-8–Ser-15 and Leu-99–Gly-106 each bind ATP.

It belongs to the THEP1 NTPase family.

The catalysed reaction is a ribonucleoside 5'-triphosphate + H2O = a ribonucleoside 5'-diphosphate + phosphate + H(+). Has nucleotide phosphatase activity towards ATP, GTP, CTP, TTP and UTP. May hydrolyze nucleoside diphosphates with lower efficiency. The protein is Nucleoside-triphosphatase THEP1 of Methanosarcina barkeri (strain Fusaro / DSM 804).